A 532-amino-acid polypeptide reads, in one-letter code: Probable bifunctional tRNA threonylcarbamoyladenosine biosynthesis protein (532 aa).

The tract at residues 1–323 (MRVLGVEGTA…FRPDEVSVTW (323 aa)) is kae1. Positions 107 and 111 each coordinate Fe cation. Residues 128-132 (NASGA), Asp160, Gly173, Glu177, and Asn256 contribute to the L-threonylcarbamoyladenylate site. Asp284 contacts Fe cation. A Protein kinase domain is found at 329-532 (PARDPGADAV…GRYQDDPETA (204 aa)). Residues 338 to 346 (VRQGAEATV) and Lys355 each bind ATP. Asp444 (proton acceptor; for kinase activity) is an active-site residue.

In the N-terminal section; belongs to the KAE1 / TsaD family. This sequence in the C-terminal section; belongs to the protein kinase superfamily. Tyr protein kinase family. BUD32 subfamily. Component of the KEOPS complex that consists of Kae1, Bud32, Cgi121 and Pcc1; the whole complex dimerizes. Fe(2+) is required as a cofactor.

The protein localises to the cytoplasm. It catalyses the reaction L-seryl-[protein] + ATP = O-phospho-L-seryl-[protein] + ADP + H(+). The enzyme catalyses L-threonyl-[protein] + ATP = O-phospho-L-threonyl-[protein] + ADP + H(+). It carries out the reaction L-threonylcarbamoyladenylate + adenosine(37) in tRNA = N(6)-L-threonylcarbamoyladenosine(37) in tRNA + AMP + H(+). In terms of biological role, required for the formation of a threonylcarbamoyl group on adenosine at position 37 (t(6)A37) in tRNAs that read codons beginning with adenine. Is a component of the KEOPS complex that is probably involved in the transfer of the threonylcarbamoyl moiety of threonylcarbamoyl-AMP (TC-AMP) to the N6 group of A37. The Kae1 domain likely plays a direct catalytic role in this reaction. The Bud32 domain probably displays kinase activity that regulates Kae1 function. The polypeptide is Probable bifunctional tRNA threonylcarbamoyladenosine biosynthesis protein (Halobacterium salinarum (strain ATCC 700922 / JCM 11081 / NRC-1) (Halobacterium halobium)).